The primary structure comprises 111 residues: Ghrelin (111 aa).

The signal sequence occupies residues methionine 1–alanine 26. Residues serine 28–proline 37 show a composition bias toward polar residues. The interval serine 28–aspartate 53 is disordered. Serine 29 carries O-decanoyl serine; alternate lipidation. Residue serine 29 is the site of O-hexanoyl serine; alternate attachment. Serine 29 is lipidated: O-octanoyl serine; alternate. The span at glutamine 38 to aspartate 53 shows a compositional bias: basic and acidic residues. Valine 47 is modified (valine amide). Residues aspartate 51–glutamate 111 constitute a propeptide, removed in mature form.

The protein belongs to the motilin family. Post-translationally, O-octanoylated by GOAT/MBOAT4. O-octanoylation or O-decanoylation is essential for activity. The O-decanoylated form ghrelin-21-C10 differs in the length of the carbon backbone of the carboxylic acid forming an ester bond with Ser-29. 44% of eel ghrelin is O-decanoylated. Highest levels in stomach and anterior intestine. Lower levels in posterior intestine, kidney and brain. Low levels in heart, head kidney and middle intestine.

The protein localises to the secreted. Its function is as follows. Ligand for growth hormone secretagogue receptor type 1 (GHSR). Induces the release of growth hormone from the pituitary. Has an appetite-stimulating effect, induces adiposity and stimulates gastric acid secretion. Involved in growth regulation. This chain is Ghrelin (ghrl), found in Anguilla japonica (Japanese eel).